The following is a 386-amino-acid chain: Copper-containing nitrite reductase (386 aa).

Positions 1-18 are cleaved as a signal peptide; that stretch reads MKRQALAAIIASMFALAA. Cys-19 carries the N-palmitoyl cysteine lipid modification. The S-diacylglycerol cysteine moiety is linked to residue Cys-19. 2 Plastocyanin-like domains span residues 97–191 and 241–342; these read WTFD…ILVE and GHVG…LKVE. Positions 130, 135, 170, 171, 179, and 184 each coordinate Cu cation. A substrate-binding site is contributed by His-135. Residue His-276 coordinates substrate. His-325 serves as a coordination point for Cu cation. Residues 363–386 form a disordered region; sequence GAAPAASAPAASAPAASAPAKSDY. A compositionally biased stretch (low complexity) spans 364-386; the sequence is AAPAASAPAASAPAASAPAKSDY. A run of 3 repeats spans residues 367–371, 372–376, and 377–381. The segment at 367–381 is 3 X 5 AA tandem repeats of A-A-S-A-P; the sequence is AASAPAASAPAASAP.

It belongs to the multicopper oxidase family. Homotrimer. Cu(+) is required as a cofactor. It depends on Cu(2+) as a cofactor.

It localises to the cell outer membrane. It carries out the reaction nitric oxide + Fe(III)-[cytochrome c] + H2O = Fe(II)-[cytochrome c] + nitrite + 2 H(+). In terms of biological role, catalyzes the reduction of nitrite to nitric oxide (NO). It could be essential for growth and survival in oxygen-depleted environments. The protein is Copper-containing nitrite reductase (aniA) of Neisseria meningitidis serogroup A / serotype 4A (strain DSM 15465 / Z2491).